The chain runs to 1003 residues: Helicase-like transcription factor (1003 aa).

Position 27 is an omega-N-methylarginine (Arg27). The DNA-binding stretch occupies residues 38–287; that stretch reads EFQDIIPPDD…FSVKERPENV (250 aa). Lys112 is covalently cross-linked (Glycyl lysine isopeptide (Lys-Gly) (interchain with G-Cter in SUMO2)). A Phosphotyrosine; by JAK2 modification is found at Tyr195. Residue Lys211 forms a Glycyl lysine isopeptide (Lys-Gly) (interchain with G-Cter in SUMO2) linkage. 294-301 is a binding site for ATP; it reads DDMGLGKT. Residues 317–373 form a disordered region; sequence PLLSKRGKKNHPGKEYKDETIKRRGSNMDKKEDGHSESSTCGEEPSISGTPEKSSCT. Basic and acidic residues predominate over residues 328 to 352; it reads PGKEYKDETIKRRGSNMDKKEDGHS. A compositionally biased stretch (polar residues) spans 353 to 373; that stretch reads ESSTCGEEPSISGTPEKSSCT. Ser394, Ser395, and Ser397 each carry phosphoserine. The region spanning 433–600 is the Helicase ATP-binding domain; it reads DSKFALTFFA…WSLLSFLKLK (168 aa). The short motif at 551-554 is the DEGH box element; it reads DEGH. Thr730 bears the Phosphothreonine mark. Residues 754 to 795 form an RING-type zinc finger; that stretch reads CAICLDSLTFPVITHCAHVFCKPCICQVIHSEQPHAKCPLCR. Residues 831–990 form the Helicase C-terminal domain; sequence ALMHALIELR…TKKTDANDMK (160 aa). The tract at residues 919–1003 is interaction with SP1 and SP3; it reads SRVFLMDPAW…INEIRTLIDL (85 aa).

The protein belongs to the SNF2/RAD54 helicase family. RAD16 subfamily. As to quaternary structure, interacts with SP1 and SP3 independently of DNA; the interaction with these transcriptional factors may be required for basal transcription of target genes. Interacts with EGR1; the interaction requires prior binding to DNA and represses c-Rel via a DNA looping mechanism. Interacts with GATA4. Interacts with PCNA; the interaction promotes polyubiquitination of PCNA through association with the UBE2B-RAD18 and UBE2V2-UBE2N ubiquitin ligase complexes. Interacts with RAD18, SHPRH, UBE2V2 and UBE2N. As to expression, expressed in brain, heart, kidney, liver, lung, pancreas, placenta and skeletal muscle.

It is found in the cytoplasm. Its subcellular location is the nucleus. The protein resides in the nucleolus. The protein localises to the nucleoplasm. The catalysed reaction is S-ubiquitinyl-[E2 ubiquitin-conjugating enzyme]-L-cysteine + [acceptor protein]-L-lysine = [E2 ubiquitin-conjugating enzyme]-L-cysteine + N(6)-ubiquitinyl-[acceptor protein]-L-lysine.. It functions in the pathway protein modification; protein ubiquitination. Functionally, has both helicase and E3 ubiquitin ligase activities. Possesses intrinsic ATP-dependent nucleosome-remodeling activity. This activity may be required for transcriptional activation or repression of specific target promoters. These may include the SERPINE1, to which this protein can bind directly. Plays a role in error-free postreplication repair (PRR) of damaged DNA and maintains genomic stability through acting as a ubiquitin ligase for 'Lys-63'-linked polyubiquitination of chromatin-bound PCNA. The polypeptide is Helicase-like transcription factor (Hltf) (Mus musculus (Mouse)).